The following is a 374-amino-acid chain: MSLEAFHHSEPLTLGVELELQLVSTNDYDLAPYAEDMLRIMKKVPLPGSVVPEMTNSMIEISTGVCHSSSEVLGQLTQIRDALVKSADKLNIAVVGGGTHPFQQWHERRIYDKPRFQELSQLYGYLSKQFTIFGQHVHIGCPDADSALLMLHRMSRYIPHFIALSASSPYVQAQDTQFDSARLNSVFAFPLSGRAPCVLTWSEFEQYFNKMTRTGVVKSMKDFYWDIRPKPEYGTIEIRVFDTPLTIERAAALAGYVQSLAAWFLAEQPFTPTEDDYLVYTYNRFQACRFGLDAVYVDPASGDHMPLRDHILQTLDHVARYAGTHGASGALHMLRGETALGQNDARWLRERQREEQLLAEVSRQAALRFRGHDI.

The protein belongs to the glutamate--cysteine ligase type 2 family. YbdK subfamily.

The enzyme catalyses L-cysteine + L-glutamate + ATP = gamma-L-glutamyl-L-cysteine + ADP + phosphate + H(+). ATP-dependent carboxylate-amine ligase which exhibits weak glutamate--cysteine ligase activity. The protein is Putative glutamate--cysteine ligase 2 of Acidovorax sp. (strain JS42).